Here is a 602-residue protein sequence, read N- to C-terminus: Aspartate--tRNA(Asp/Asn) ligase (602 aa).

Position 177 (E177) interacts with L-aspartate. An aspartate region spans residues 201 to 204; it reads QLFK. R223 provides a ligand contact to L-aspartate. ATP contacts are provided by residues 223–225 and Q232; that span reads RDE. H460 is an L-aspartate binding site. E497 provides a ligand contact to ATP. Residue R504 participates in L-aspartate binding. Residue 549–552 participates in ATP binding; sequence GLDR.

It belongs to the class-II aminoacyl-tRNA synthetase family. Type 1 subfamily. Homodimer.

It is found in the cytoplasm. It catalyses the reaction tRNA(Asx) + L-aspartate + ATP = L-aspartyl-tRNA(Asx) + AMP + diphosphate. Functionally, aspartyl-tRNA synthetase with relaxed tRNA specificity since it is able to aspartylate not only its cognate tRNA(Asp) but also tRNA(Asn). Reaction proceeds in two steps: L-aspartate is first activated by ATP to form Asp-AMP and then transferred to the acceptor end of tRNA(Asp/Asn). The polypeptide is Aspartate--tRNA(Asp/Asn) ligase (Prochlorococcus marinus (strain MIT 9515)).